The sequence spans 166 residues: PR-toxin biosynthesis cluster protein 10 (166 aa).

In terms of biological role, part of the gene cluster that mediates the biosynthesis of PR-toxin, a bicyclic sesquiterpene belonging to the eremophilane class and acting as a mycotoxin. The first step of the pathway is catalyzed by the aristolochene synthase which performs the cyclization of trans,trans-farnesyl diphosphate (FPP) to the bicyclic sesquiterpene aristolochene. Following the formation of aristolochene, the non-oxygenated aristolochene is converted to the trioxygenated intermediate eremofortin B, via 7-epi-neopetasone. This conversion appears to involve three enzymes, a hydroxysterol oxidase-like enzyme, the quinone-oxidase prx3 that forms the quinone-type-structure in the bicyclic nucleus of aristolochene with the C8-oxo group and the C-3 hydroxyl group, and the P450 monooxygenase prx9 that introduces the epoxide at the double bond between carbons 1 and 2. No monoxy or dioxy-intermediates have been reported to be released to the broth, so these three early oxidative reactions may be coupled together. Eremofortin B is further oxidized by another P450 monooxygenase, that introduces a second epoxide between carbons 7 and 11 prior to acetylation to eremofortin A by the acetyltransferase prx11. The second epoxidation may be performed by a second P450 monooxygenase. After the acetylation step, eremofortin A is converted to eremofortin C and then to PR-toxin. First the conversion of eremofortin A to eremofortin C proceeds by oxidation of the side chain of the molecule at C-12 and is catalyzed by the short-chain oxidoreductase prx1. The cytochrome P450 monooxygenase prx8 also plays a role in this step. The primary alcohol formed at C-12 is finally oxidized by the short-chain alcohol dehydrogenase prx4 that forms PR-toxin. The sequence is that of PR-toxin biosynthesis cluster protein 10 from Penicillium rubens (strain ATCC 28089 / DSM 1075 / NRRL 1951 / Wisconsin 54-1255) (Penicillium chrysogenum).